Here is a 128-residue protein sequence, read N- to C-terminus: Ribosome-binding factor A (128 aa).

It belongs to the RbfA family. As to quaternary structure, monomer. Binds 30S ribosomal subunits, but not 50S ribosomal subunits or 70S ribosomes.

The protein localises to the cytoplasm. Its function is as follows. One of several proteins that assist in the late maturation steps of the functional core of the 30S ribosomal subunit. Associates with free 30S ribosomal subunits (but not with 30S subunits that are part of 70S ribosomes or polysomes). Required for efficient processing of 16S rRNA. May interact with the 5'-terminal helix region of 16S rRNA. This is Ribosome-binding factor A from Idiomarina loihiensis (strain ATCC BAA-735 / DSM 15497 / L2-TR).